Reading from the N-terminus, the 304-residue chain is Large ribosomal subunit protein uL18z (304 aa).

The interval 285 to 304 (LNALNSSAGADDDDEEEDDE) is disordered. The segment covering 294 to 304 (ADDDDEEEDDE) has biased composition (acidic residues).

The protein belongs to the universal ribosomal protein uL18 family. As to quaternary structure, component of the large ribosomal subunit (LSU).

It is found in the cytoplasm. It localises to the nucleus. In terms of biological role, component of the ribosome, a large ribonucleoprotein complex responsible for the synthesis of proteins in the cell. The small ribosomal subunit (SSU) binds messenger RNAs (mRNAs) and translates the encoded message by selecting cognate aminoacyl-transfer RNA (tRNA) molecules. The large subunit (LSU) contains the ribosomal catalytic site termed the peptidyl transferase center (PTC), which catalyzes the formation of peptide bonds, thereby polymerizing the amino acids delivered by tRNAs into a polypeptide chain. The nascent polypeptides leave the ribosome through a tunnel in the LSU and interact with protein factors that function in enzymatic processing, targeting, and the membrane insertion of nascent chains at the exit of the ribosomal tunnel. The polypeptide is Large ribosomal subunit protein uL18z (RPL5A) (Oryza sativa subsp. japonica (Rice)).